We begin with the raw amino-acid sequence, 237 residues long: ATP-dependent dethiobiotin synthetase BioD (237 aa).

Residue 12-17 (DAGKTL) coordinates ATP. A Mg(2+)-binding site is contributed by T16. Residue K37 is part of the active site. S41 is a binding site for substrate. ATP is bound by residues D54, 116-119 (EGAG), and 213-215 (PRL). The Mg(2+) site is built by D54 and E116.

It belongs to the dethiobiotin synthetase family. In terms of assembly, homodimer. Mg(2+) is required as a cofactor.

It is found in the cytoplasm. It catalyses the reaction (7R,8S)-7,8-diammoniononanoate + CO2 + ATP = (4R,5S)-dethiobiotin + ADP + phosphate + 3 H(+). It functions in the pathway cofactor biosynthesis; biotin biosynthesis; biotin from 7,8-diaminononanoate: step 1/2. Its function is as follows. Catalyzes a mechanistically unusual reaction, the ATP-dependent insertion of CO2 between the N7 and N8 nitrogen atoms of 7,8-diaminopelargonic acid (DAPA, also called 7,8-diammoniononanoate) to form a ureido ring. The sequence is that of ATP-dependent dethiobiotin synthetase BioD from Chromohalobacter salexigens (strain ATCC BAA-138 / DSM 3043 / CIP 106854 / NCIMB 13768 / 1H11).